The sequence spans 504 residues: UDP-GalNAc:beta-1,3-N-acetylgalactosaminyltransferase 2 (504 aa).

At 1–3 (MRN) the chain is on the cytoplasmic side. Residues 4-24 (WLVLLCPCVLGAALHLWHLWL) traverse the membrane as a helical; Signal-anchor for type II membrane protein segment. The Lumenal portion of the chain corresponds to 25–504 (RSPPDPHNTG…DPCQCEAKVR (480 aa)). Residues asparagine 117 and asparagine 176 are each glycosylated (N-linked (GlcNAc...) asparagine).

This sequence belongs to the glycosyltransferase 31 family. In terms of processing, N-glycosylated. In terms of tissue distribution, present in testis (at protein level). In testis, it is mainly detected in the middle layers of seminiferous tubules at stages XII to II. Strongly expressed in primary and secondary spermatocytes and early round spermatids, but not in spermatogonia, elongating or elongated spermatids, or in Leydig or Sertoli cells.

The protein resides in the golgi apparatus membrane. It localises to the endoplasmic reticulum. It catalyses the reaction 3-O-(N-acetyl-beta-D-glucosaminyl-(1-&gt;4)-alpha-D-mannosyl)-L-threonyl-[protein] + UDP-N-acetyl-alpha-D-galactosamine = 3-O-[beta-D-GalNAc-(1-&gt;3)-beta-D-GlcNAc-(1-&gt;4)-alpha-D-Man]-L-Thr-[protein] + UDP + H(+). It functions in the pathway protein modification; protein glycosylation. In terms of biological role, beta-1,3-N-acetylgalactosaminyltransferase that synthesizes a unique carbohydrate structure, GalNAc-beta-1-3GlcNAc, on N- and O-glycans. Has no galactose nor galactosaminyl transferase activity toward any acceptor substrate. Involved in alpha-dystroglycan (DAG1) glycosylation: acts coordinately with GTDC2/POMGnT2 to synthesize a GalNAc-beta3-GlcNAc-beta-terminus at the 4-position of protein O-mannose in the biosynthesis of the phosphorylated O-mannosyl trisaccharide (N-acetylgalactosamine-beta-3-N-acetylglucosamine-beta-4-(phosphate-6-)mannose), a carbohydrate structure present in alpha-dystroglycan, which is required for binding laminin G-like domain-containing extracellular proteins with high affinity. In Mus musculus (Mouse), this protein is UDP-GalNAc:beta-1,3-N-acetylgalactosaminyltransferase 2 (B3galnt2).